Consider the following 727-residue polypeptide: Calpain-like protease 1 (727 aa).

The region spanning 70-317 is the Calpain catalytic domain; it reads SRFYPPIPIS…FKQLYLNWNQ (248 aa). Residues Cys128, His271, and Asn296 contribute to the active site.

The protein belongs to the peptidase C2 family. PalB/RIM13 subfamily. Interacts with SNF7, which may act together with RIM20 as a scaffold to recruit RIM13 to its substrate RIM101.

In terms of biological role, required for the proteolytic cleavage of the transcriptional repressor RIM101 in response to alkaline ambient pH, which is necessary for sporulation and invasive growth. Probably the protease that cleaves RIM101. The polypeptide is Calpain-like protease 1 (RIM13) (Saccharomyces cerevisiae (strain ATCC 204508 / S288c) (Baker's yeast)).